The sequence spans 423 residues: 58 kDa phosphoprotein (423 aa).

Residues 46–60 (KMGYEKMKSEDSTEE) show a composition bias toward basic and acidic residues. Residues 46 to 82 (KMGYEKMKSEDSTEEKSDEEEEDEEEEEEEEEDDDPE) form a disordered region. Positions 61 to 82 (KSDEEEEDEEEEEEEEEDDDPE) are enriched in acidic residues. TPR repeat units follow at residues 113-146 (ICKLKEEAVDLVENKKYEEALEKYNKIISFGNPS), 147-180 (AMIYTKRASILLNLKRPKACIRDCTEALNLNVDS), and 181-214 (ANAYKIRAKAYRYLGKWEFAHADMEQGQKIDYDE). Residues 260-301 (KKKAEKMYKENNKRENYDSDSSDSSYSEPDFSGDFPGGMPGG) form a disordered region. The segment covering 264–276 (EKMYKENNKRENY) has biased composition (basic and acidic residues). Residues 292 to 362 (GDFPGGMPGG…GMPGMPGGMP (71 aa)) are 19 X 3-4 AA approximate repeats. Residues 361–423 (MPDLNSPEMK…GGMMGEKPKP (63 aa)) form the STI1 domain.

It localises to the cytoplasm. May play a role in protein folding or protein-protein interactions. May act as a co-chaperone. This is 58 kDa phosphoprotein from Plasmodium berghei.